A 138-amino-acid polypeptide reads, in one-letter code: ATP synthase epsilon chain (138 aa).

This sequence belongs to the ATPase epsilon chain family. As to quaternary structure, F-type ATPases have 2 components, CF(1) - the catalytic core - and CF(0) - the membrane proton channel. CF(1) has five subunits: alpha(3), beta(3), gamma(1), delta(1), epsilon(1). CF(0) has three main subunits: a, b and c.

It localises to the cell membrane. Produces ATP from ADP in the presence of a proton gradient across the membrane. The protein is ATP synthase epsilon chain of Streptococcus uberis (strain ATCC BAA-854 / 0140J).